Here is a 298-residue protein sequence, read N- to C-terminus: MAAAEPAVPALPGGGGAGAGAPSGTVPVLFCFSVFARPAAVPHGAGYELLIQKFLSLYGDQIDMHRKFVVQLFAEEWGQYVDLPKGFAVSERCKVRLVPLQIQLTTLGNLTPSSTVFFCCDMQERFRPAIKYFGDIISVGQRLLQGARILGIPVIVTEQYPKGLGSTVQEIDLTGVKLVLPKTKFSMVLPEVEAALAEIPGVRSVVLFGVETHVCIQQTALELVGRGIEVHIVADATSSRSMMDRMFALERLARTGIIVTTSEAVLLQLVADKDHPKFKEIQNLIKASAPESGLLSKV.

Tyr160 bears the Phosphotyrosine mark. Lys279 carries the post-translational modification N6-succinyllysine.

Belongs to the isochorismatase family.

The chain is Isochorismatase domain-containing protein 1 (ISOC1) from Bos taurus (Bovine).